Consider the following 485-residue polypeptide: Probable glycine dehydrogenase (decarboxylating) subunit 2 (485 aa).

N6-(pyridoxal phosphate)lysine is present on Lys273.

The protein belongs to the GcvP family. C-terminal subunit subfamily. As to quaternary structure, the glycine cleavage system is composed of four proteins: P, T, L and H. In this organism, the P 'protein' is a heterodimer of two subunits. It depends on pyridoxal 5'-phosphate as a cofactor.

It catalyses the reaction N(6)-[(R)-lipoyl]-L-lysyl-[glycine-cleavage complex H protein] + glycine + H(+) = N(6)-[(R)-S(8)-aminomethyldihydrolipoyl]-L-lysyl-[glycine-cleavage complex H protein] + CO2. The glycine cleavage system catalyzes the degradation of glycine. The P protein binds the alpha-amino group of glycine through its pyridoxal phosphate cofactor; CO(2) is released and the remaining methylamine moiety is then transferred to the lipoamide cofactor of the H protein. This is Probable glycine dehydrogenase (decarboxylating) subunit 2 from Oceanobacillus iheyensis (strain DSM 14371 / CIP 107618 / JCM 11309 / KCTC 3954 / HTE831).